We begin with the raw amino-acid sequence, 100 residues long: UPF0213 protein CKO_04549 (100 aa).

In terms of domain architecture, GIY-YIG spans 2 to 77; sequence TPWYLYLIRT…KRLTKRQKER (76 aa).

The protein belongs to the UPF0213 family.

This is UPF0213 protein CKO_04549 from Citrobacter koseri (strain ATCC BAA-895 / CDC 4225-83 / SGSC4696).